The following is a 640-amino-acid chain: Threonine--tRNA ligase (640 aa).

Positions 1–63 (MSSVTVTLPD…SEDCEIEIVT (63 aa)) constitute a TGS domain. The segment at 242 to 533 (DHRKLGREMD…LIEHYNGRFP (292 aa)) is catalytic. Residues cysteine 334, histidine 385, and histidine 510 each contribute to the Zn(2+) site.

This sequence belongs to the class-II aminoacyl-tRNA synthetase family. In terms of assembly, homodimer. Requires Zn(2+) as cofactor.

The protein resides in the cytoplasm. It carries out the reaction tRNA(Thr) + L-threonine + ATP = L-threonyl-tRNA(Thr) + AMP + diphosphate + H(+). In terms of biological role, catalyzes the attachment of threonine to tRNA(Thr) in a two-step reaction: L-threonine is first activated by ATP to form Thr-AMP and then transferred to the acceptor end of tRNA(Thr). The protein is Threonine--tRNA ligase of Halobacterium salinarum (strain ATCC 29341 / DSM 671 / R1).